A 282-amino-acid chain; its full sequence is Probable endonuclease 4 (282 aa).

The Zn(2+) site is built by His-67, His-107, Glu-144, Asp-178, His-181, His-215, Asp-228, His-230, and Glu-260.

Belongs to the AP endonuclease 2 family. Zn(2+) serves as cofactor.

The catalysed reaction is Endonucleolytic cleavage to 5'-phosphooligonucleotide end-products.. Endonuclease IV plays a role in DNA repair. It cleaves phosphodiester bonds at apurinic or apyrimidinic (AP) sites, generating a 3'-hydroxyl group and a 5'-terminal sugar phosphate. The chain is Probable endonuclease 4 from Methanoculleus marisnigri (strain ATCC 35101 / DSM 1498 / JR1).